Consider the following 290-residue polypeptide: uncharacterized protein (290 aa).

3 disordered regions span residues 89–157 (CSEN…EELS), 172–217 (MANT…MESS), and 261–290 (TANT…AVKK). Basic and acidic residues-rich tracts occupy residues 106 to 124 (DFSK…EKQP) and 142 to 152 (KTEKLVSKEPS). Polar residues-rich tracts occupy residues 172 to 183 (MANTSSSANRTG) and 193 to 202 (KPTTAVQAST). 2 stretches are compositionally biased toward low complexity: residues 207-217 (MSSAESAMESS) and 274-290 (PSSE…AVKK).

This is an uncharacterized protein from Caenorhabditis elegans.